We begin with the raw amino-acid sequence, 23 residues long: Chaperonin GroEL (23 aa).

This sequence belongs to the chaperonin (HSP60) family. Forms a cylinder of 14 subunits composed of two heptameric rings stacked back-to-back. Interacts with the co-chaperonin GroES. Post-translationally, phosphorylated on threonine.

Its subcellular location is the cytoplasm. The enzyme catalyses ATP + H2O + a folded polypeptide = ADP + phosphate + an unfolded polypeptide.. Together with its co-chaperonin GroES, plays an essential role in assisting protein folding. The GroEL-GroES system forms a nano-cage that allows encapsulation of the non-native substrate proteins and provides a physical environment optimized to promote and accelerate protein folding. The polypeptide is Chaperonin GroEL (Acidithiobacillus ferrooxidans (Thiobacillus ferrooxidans)).